The primary structure comprises 765 residues: Protein BCH2 (765 aa).

A disordered region spans residues 1–31; that stretch reads MSFLWGSTKSKKGKNKKAAGSLPSGVVPQQR. Positions 735–765 are CHS5-binding; that stretch reads LECLSKNRNEACLAYERPLPDLPSTIKPLAD.

This sequence belongs to the CHAPS family. Component of the CHS5/6 complex composed of the 4 CHAPS proteins BCH1, BCH2, BUD7, and CHS6 as well as at least CHS5 and GTP-bound ARF1. The complex interacts with the cargo protein CHS3.

It is found in the golgi apparatus. It localises to the trans-Golgi network membrane. Functionally, member of the CHS5-ARF1P-binding proteins (CHAPS) which mediates export of specific cargo proteins, including chitin synthase CHS3. The polypeptide is Protein BCH2 (BCH2) (Saccharomyces cerevisiae (strain ATCC 204508 / S288c) (Baker's yeast)).